The primary structure comprises 348 residues: Phosphate acyltransferase (348 aa).

It belongs to the PlsX family. Homodimer. Probably interacts with PlsY.

It localises to the cytoplasm. The catalysed reaction is a fatty acyl-[ACP] + phosphate = an acyl phosphate + holo-[ACP]. It participates in lipid metabolism; phospholipid metabolism. Functionally, catalyzes the reversible formation of acyl-phosphate (acyl-PO(4)) from acyl-[acyl-carrier-protein] (acyl-ACP). This enzyme utilizes acyl-ACP as fatty acyl donor, but not acyl-CoA. The protein is Phosphate acyltransferase of Francisella philomiragia subsp. philomiragia (strain ATCC 25017 / CCUG 19701 / FSC 153 / O#319-036).